Reading from the N-terminus, the 1032-residue chain is ATPase MORC2 (1032 aa).

At Ala2 the chain carries N-acetylalanine. Residues Asn39, 87 to 89 (SAK), and 99 to 105 (QYGNGLK) contribute to the ATP site. Mg(2+) is bound at residue Asn39. Positions 282–362 (SRFKTRAEQE…KEAKQRALKE (81 aa)) form a coiled coil. Lys427 contributes to the ATP binding site. A CW-type zinc finger spans residues 490–544 (AMEIPTTIQCDLCLKWRTLPFQLSSVEKDYPDTWVCSMNPDPEQDRCEASEQKQK). Zn(2+) is bound by residues Cys499, Cys502, Cys525, and Cys536. Disordered regions lie at residues 530–563 (DPEQDRCEASEQKQKVPLGTFRKDMKTQEEKQKQ) and 577–793 (ALQK…RAQK). Composition is skewed to basic and acidic residues over residues 532 to 543 (EQDRCEASEQKQ) and 550 to 563 (FRKDMKTQEEKQKQ). The stretch at 547-584 (LGTFRKDMKTQEEKQKQLTEKIRQQQEKLEALQKTTPI) forms a coiled coil. Thr582 carries the post-translational modification Phosphothreonine. A phosphoserine mark is found at Ser602 and Ser615. The span at 627 to 638 (SRPPSLPTPRPA) shows a compositional bias: pro residues. Lys652 participates in a covalent cross-link: Glycyl lysine isopeptide (Lys-Gly) (interchain with G-Cter in SUMO2). Over residues 690-704 (PLVQQLSPSLLPNSK) the composition is skewed to low complexity. The residue at position 696 (Ser696) is a Phosphoserine. A Glycyl lysine isopeptide (Lys-Gly) (interchain with G-Cter in SUMO2) cross-link involves residue Lys704. The residue at position 705 (Ser705) is a Phosphoserine. Over residues 711–720 (SPKVIKTPVV) the composition is skewed to low complexity. Lys716 is covalently cross-linked (Glycyl lysine isopeptide (Lys-Gly) (interchain with G-Cter in SUMO2)). A phosphoserine mark is found at Ser725 and Ser730. Phosphothreonine is present on Thr733. Position 739 is a phosphoserine; by PAK1 (Ser739). Residues 741 to 761 (AVSDEEEVEEEAERRKERCKR) adopt a coiled-coil conformation. Phosphoserine is present on Ser743. Residues 765-774 (VVKEEKKDSN) show a composition bias toward basic and acidic residues. Lys767 participates in a covalent cross-link: Glycyl lysine isopeptide (Lys-Gly) (interchain with G-Cter in SUMO2). Phosphoserine is present on residues Ser777 and Ser779. Lys819 participates in a covalent cross-link: Glycyl lysine isopeptide (Lys-Gly) (interchain with G-Cter in SUMO2). The interval 850-870 (RLMKPPSPEHQSLDTQQEGGE) is disordered. A Glycyl lysine isopeptide (Lys-Gly) (interchain with G-Cter in SUMO2) cross-link involves residue Lys932. A coiled-coil region spans residues 966 to 1016 (QSRADSRAKASEESLRTSERKLRETEEKLQKLRTNIVALLQKVQEDIDINT).

Homodimerizes upon ATP-binding and dissociate upon ATP hydrolysis; homodimerization is required for gene silencing. Interacts with HDAC4. Interacts with ACLY. Interacts with TASOR and MPHOSPH8; the interactions associate MORC2 with the HUSH complex which recruits MORC2 to heterochromatic loci. In terms of processing, phosphorylated by PAK1 at Ser-739 upon DNA damage. Phosphorylation is required for ATPase activity and recruitment to damaged chromatin. In terms of tissue distribution, highly expressed in smooth muscle, pancreas and testis.

The protein resides in the nucleus. It is found in the cytoplasm. The protein localises to the cytosol. Its subcellular location is the chromosome. It localises to the nucleus matrix. The catalysed reaction is ATP + H2O = ADP + phosphate + H(+). Its activity is regulated as follows. ATPase activity is dependent of phosphorylation by PAK1 and presence of DNA. Its function is as follows. Essential for epigenetic silencing by the HUSH (human silencing hub) complex. Recruited by HUSH to target site in heterochromatin, the ATPase activity and homodimerization are critical for HUSH-mediated silencing. Represses germ cell-related genes and L1 retrotransposons in collaboration with SETDB1 and the HUSH complex, the silencing is dependent of repressive epigenetic modifications, such as H3K9me3 mark. Silencing events often occur within introns of transcriptionally active genes, and lead to the down-regulation of host gene expression. During DNA damage response, regulates chromatin remodeling through ATP hydrolysis. Upon DNA damage, is phosphorylated by PAK1, both colocalize to chromatin and induce H2AX expression. ATPase activity is required and dependent of phosphorylation by PAK1 and presence of DNA. Recruits histone deacetylases, such as HDAC4, to promoter regions, causing local histone H3 deacetylation and transcriptional repression of genes such as CA9. Exhibits a cytosolic function in lipogenesis, adipogenic differentiation, and lipid homeostasis by increasing the activity of ACLY, possibly preventing its dephosphorylation. The protein is ATPase MORC2 of Homo sapiens (Human).